The sequence spans 169 residues: 16S rRNA aminocarboxypropyltransferase (169 aa).

The S-adenosyl-L-methionine site is built by Thr-15, Val-65, Leu-88, and Thr-107.

Belongs to the TDD superfamily. TSR3 family.

It localises to the cytoplasm. It carries out the reaction an N(1)-methylpseudouridine in rRNA + S-adenosyl-L-methionine = N(1)-methyl-N(3)-[(3S)-3-amino-3-carboxypropyl]pseudouridine in rRNA + S-methyl-5'-thioadenosine + H(+). In terms of biological role, aminocarboxypropyltransferase that catalyzes the aminocarboxypropyl transfer on pseudouridine corresponding to position 914 in M.jannaschii 16S rRNA. It constitutes the last step in biosynthesis of the hypermodified N1-methyl-N3-(3-amino-3-carboxypropyl) pseudouridine (m1acp3-Psi). This is 16S rRNA aminocarboxypropyltransferase from Methanopyrus kandleri (strain AV19 / DSM 6324 / JCM 9639 / NBRC 100938).